The primary structure comprises 73 residues: U-scoloptoxin(15)-Sa1a (73 aa).

Positions 1 to 20 (MKFHIIFCLLAALMMTSAFA) are cleaved as a signal peptide.

This sequence belongs to the scoloptoxin-15 family. In terms of processing, contains 2 disulfide bonds. As to expression, expressed by the venom gland.

Its subcellular location is the secreted. The protein is U-scoloptoxin(15)-Sa1a of Scolopendra alternans (Florida Keys giant centipede).